Reading from the N-terminus, the 3649-residue chain is N-(5-amino-5-carboxypentanoyl)-L-cysteinyl-D-valine synthase (3649 aa).

The tract at residues 401–861 (SRDRAYVTYT…LAGHLESQGH (461 aa)) is domain 1 (adipate-activating). 3 Carrier domains span residues 783–860 (APLL…ESQG), 1859–1936 (APVS…QAAA), and 2909–2984 (APRD…LSGL). O-(pantetheine 4'-phosphoryl)serine is present on residues Ser-820, Ser-1896, and Ser-2944. The domain 2 (cysteine-activating) stretch occupies residues 1014–1937 (HHIILDGWSL…QAEHIQAAAL (924 aa)). The segment at 2079–2985 (HHSCFDGWSW…FVDNVLSGLA (907 aa)) is domain 3 (valine-activating). The active-site For thioesterase activity is Ser-3502.

It belongs to the ATP-dependent AMP-binding enzyme family. Requires pantetheine 4'-phosphate as cofactor.

It catalyses the reaction L-2-aminoadipate + L-valine + L-cysteine + 3 ATP + H2O = N-[(5S)-5-amino-5-carboxypentanoyl]-L-cysteinyl-D-valine + 3 AMP + 3 diphosphate + 3 H(+). It participates in antibiotic biosynthesis; penicillin G biosynthesis; penicillin G from L-alpha-aminoadipate and L-cysteine and L-valine: step 1/3. Functionally, each of the constituent amino acids of the tripeptide acv are activated as aminoacyl-adenylates with peptide bonds formed through the participation of amino acid thioester intermediates. The polypeptide is N-(5-amino-5-carboxypentanoyl)-L-cysteinyl-D-valine synthase (pcbAB) (Amycolatopsis lactamdurans (Nocardia lactamdurans)).